The primary structure comprises 330 residues: Methionyl-tRNA formyltransferase (330 aa).

112 to 115 (SLLP) serves as a coordination point for (6S)-5,6,7,8-tetrahydrofolate.

It belongs to the Fmt family.

It carries out the reaction L-methionyl-tRNA(fMet) + (6R)-10-formyltetrahydrofolate = N-formyl-L-methionyl-tRNA(fMet) + (6S)-5,6,7,8-tetrahydrofolate + H(+). In terms of biological role, attaches a formyl group to the free amino group of methionyl-tRNA(fMet). The formyl group appears to play a dual role in the initiator identity of N-formylmethionyl-tRNA by promoting its recognition by IF2 and preventing the misappropriation of this tRNA by the elongation apparatus. The protein is Methionyl-tRNA formyltransferase of Alcanivorax borkumensis (strain ATCC 700651 / DSM 11573 / NCIMB 13689 / SK2).